Here is a 764-residue protein sequence, read N- to C-terminus: MASHNENDDIPMLPISDPSSRTRARAFTSRSRSVSLSNPTSSIEGFDTSTVVLGYTGPLRTQRRPPLVQMSGPLTSTRKHEPLFLPHPSSDSVGVSSQPERYPSFAALEHKNSSEDEFVLKHANLLRSGQLGMCNDPYCTTCPSYYNRKAAQIPTSRVSALFDSTFHNALYDDAKGWARRFASSVNRYLPGIMNPHAKEVQTWTKFFALSCLLAIFIDPLFFFLIKVQEQNKCIMIDWPMTKAFVAVRSVTDVIFTMNILLQFRLAYVARESTVVGAGQLVSHPKKIALHYLKGKFFLDLFIVMPLPQILILWIIPAHLGASGANYAKNLLRAAVLFQYIPKLYRLLPFLAGQTPTGFIFESAWANFVINLLTFMLAGHVVGSCWYLFGLQRVNQCLRNACGNFGRECQDLIDCGNGNSSVLVRATWKDNASANACFQEDGFPYGIYLKAVNLTNHSNLFTRYSYSLFWGFQQISTLAGNQVPSYFLGEVFFTMGIIGLGLLLFALLIGNMQNFLQALGKRNLEMTLRRRDVEQWMSHRRLPDGIRRRVREAERFNWAATRGVNEELLFENMPDDLQRDIRRHLFKFLKKVRIFSLMDEPILDAIRERLKQRTYIGSSTVLHRGGLVEKMVFIVRGEMESIGEDGSVLPLYEGDVCGEELLTWCLERSSVNPDGTRIRMPSKGLLSSRNVRCVTNVEAFSLSVADLEDVTSLFSRFLRSHRVQGAIRYDSPYWRLRAARQIQVAWRYRRRRLHRLCTPQSSYSL.

A chloroplast-targeting transit peptide spans 1-25; it reads MASHNENDDIPMLPISDPSSRTRAR. The segment at 1–40 is disordered; sequence MASHNENDDIPMLPISDPSSRTRARAFTSRSRSVSLSNPT. The span at 19–33 shows a compositional bias: low complexity; it reads SSRTRARAFTSRSRS. At 26-204 the chain is on the stromal side; sequence AFTSRSRSVS…PHAKEVQTWT (179 aa). The helical transmembrane segment at 205-225 threads the bilayer; sequence KFFALSCLLAIFIDPLFFFLI. Over 226–242 the chain is Lumenal; the sequence is KVQEQNKCIMIDWPMTK. A helical transmembrane segment spans residues 243–263; it reads AFVAVRSVTDVIFTMNILLQF. Topologically, residues 264-295 are stromal; the sequence is RLAYVARESTVVGAGQLVSHPKKIALHYLKGK. A helical membrane pass occupies residues 296-316; that stretch reads FFLDLFIVMPLPQILILWIIP. Residues 317–329 are Lumenal-facing; that stretch reads AHLGASGANYAKN. Residues 330-350 traverse the membrane as a helical segment; the sequence is LLRAAVLFQYIPKLYRLLPFL. At 351 to 366 the chain is on the stromal side; the sequence is AGQTPTGFIFESAWAN. The chain crosses the membrane as a helical span at residues 367-387; sequence FVINLLTFMLAGHVVGSCWYL. Topologically, residues 388–488 are lumenal; that stretch reads FGLQRVNQCL…GNQVPSYFLG (101 aa). Residues 489 to 509 form a helical membrane-spanning segment; the sequence is EVFFTMGIIGLGLLLFALLIG. Over 510-764 the chain is Stromal; that stretch reads NMQNFLQALG…LCTPQSSYSL (255 aa). A nucleoside 3',5'-cyclic phosphate is bound by residues 593–710 and Glu-658; that span reads IFSL…EDVT. Residues 713-729 are calmodulin-binding; that stretch reads FSRFLRSHRVQGAIRYD. An IQ domain is found at 734-763; that stretch reads RLRAARQIQVAWRYRRRRLHRLCTPQSSYS.

Belongs to the cyclic nucleotide-gated cation channel (TC 1.A.1.5) family. As to quaternary structure, homotetramer or heterotetramer.

The protein resides in the plastid. It localises to the chloroplast thylakoid membrane. In terms of biological role, probable cyclic nucleotide-gated ion channel. The protein is Probable cyclic nucleotide-gated ion channel 20, chloroplastic (CNGC20) of Arabidopsis thaliana (Mouse-ear cress).